A 355-amino-acid polypeptide reads, in one-letter code: Alanine racemase (355 aa).

The active-site Proton acceptor; specific for D-alanine is the Lys34. N6-(pyridoxal phosphate)lysine is present on Lys34. Arg133 is a binding site for substrate. Tyr249 (proton acceptor; specific for L-alanine) is an active-site residue. Met297 provides a ligand contact to substrate.

The protein belongs to the alanine racemase family. It depends on pyridoxal 5'-phosphate as a cofactor.

It catalyses the reaction L-alanine = D-alanine. Its pathway is amino-acid biosynthesis; D-alanine biosynthesis; D-alanine from L-alanine: step 1/1. Its function is as follows. Catalyzes the interconversion of L-alanine and D-alanine. May also act on other amino acids. This chain is Alanine racemase (alr), found in Rickettsia rickettsii (strain Sheila Smith).